The primary structure comprises 123 residues: Putative outer membrane protein CPn_0818/CP_1053/CPj0818/CpB0847 (123 aa).

The first 30 residues, 1–30 (MKRQKRKQSITLIEMMVVITLIGIIGGALA), serve as a signal peptide directing secretion.

The protein localises to the cell outer membrane. The protein is Putative outer membrane protein CPn_0818/CP_1053/CPj0818/CpB0847 of Chlamydia pneumoniae (Chlamydophila pneumoniae).